Reading from the N-terminus, the 176-residue chain is Flavodoxin-like domain-containing protein BilS (176 aa).

It participates in porphyrin-containing compound metabolism; protoheme degradation. Its function is as follows. Together with BilR, catalyzes reduction of mesobilirubin and/or bilirubin to urobilinogen, a key step during heme degradation. BilS is probably involved in electron transfer for the bilirubin reductase BilR. This chain is Flavodoxin-like domain-containing protein BilS, found in Clostridioides difficile (strain CD3).